Here is a 367-residue protein sequence, read N- to C-terminus: Tetraprenyl-beta-curcumene synthase (367 aa).

The protein belongs to the large terpene synthase family.

The catalysed reaction is all-trans-heptaprenyl diphosphate = (R)-tetraprenyl-beta-curcumene + diphosphate. In terms of biological role, catalyzes the transformation of a linear C35 prenyl diphosphate chain to form tetraprenyl-beta-curcumene. In Bacillus subtilis (strain 168), this protein is Tetraprenyl-beta-curcumene synthase (ytpB).